Reading from the N-terminus, the 995-residue chain is Integrator complex subunit 8 (995 aa).

Thr18 carries the post-translational modification Phosphothreonine. The short motif at 24 to 29 (WFEFLL) is the WFEF motif element. TPR repeat units follow at residues 250–288 (CQVCYDLGAAYFQQGSTNSAVYENAREKFFRTKELIAEI), 320–356 (SQQLTPYSQVHICLRSGNYQEVIQIFIEDNLTLSLPV), 570–603 (VYILMAKGLHCSTVKDFSHAKQLFAACLELVTEF), and 833–866 (HSWLIIQADIYFATNQYSAALHYYLQAGAVCSDF).

The protein belongs to the Integrator subunit 8 family. In terms of assembly, component of the Integrator complex, composed of core subunits INTS1, INTS2, INTS3, INTS4, INTS5, INTS6, INTS7, INTS8, INTS9/RC74, INTS10, INTS11/CPSF3L, INTS12, INTS13, INTS14 and INTS15. The core complex associates with protein phosphatase 2A subunits PPP2CA and PPP2R1A, to form the Integrator-PP2A (INTAC) complex.

It is found in the nucleus. The protein resides in the chromosome. Its function is as follows. Component of the integrator complex, a multiprotein complex that terminates RNA polymerase II (Pol II) transcription in the promoter-proximal region of genes. The integrator complex provides a quality checkpoint during transcription elongation by driving premature transcription termination of transcripts that are unfavorably configured for transcriptional elongation: the complex terminates transcription by (1) catalyzing dephosphorylation of the C-terminal domain (CTD) of Pol II subunit POLR2A/RPB1 and SUPT5H/SPT5, (2) degrading the exiting nascent RNA transcript via endonuclease activity and (3) promoting the release of Pol II from bound DNA. The integrator complex is also involved in terminating the synthesis of non-coding Pol II transcripts, such as enhancer RNAs (eRNAs), small nuclear RNAs (snRNAs), telomerase RNAs and long non-coding RNAs (lncRNAs). Within the integrator complex, INTS8 is required for the recruitment of protein phosphatase 2A (PP2A) to transcription pause-release checkpoint. In Homo sapiens (Human), this protein is Integrator complex subunit 8.